Here is a 333-residue protein sequence, read N- to C-terminus: tRNA N6-adenosine threonylcarbamoyltransferase (333 aa).

Fe cation-binding residues include His-118 and His-122. Substrate-binding positions include 140 to 144 (VVSGG), Asp-173, Gly-186, and Asn-274. Residue Asp-298 coordinates Fe cation.

It belongs to the KAE1 / TsaD family. The cofactor is Fe(2+).

Its subcellular location is the cytoplasm. It carries out the reaction L-threonylcarbamoyladenylate + adenosine(37) in tRNA = N(6)-L-threonylcarbamoyladenosine(37) in tRNA + AMP + H(+). Functionally, required for the formation of a threonylcarbamoyl group on adenosine at position 37 (t(6)A37) in tRNAs that read codons beginning with adenine. Is involved in the transfer of the threonylcarbamoyl moiety of threonylcarbamoyl-AMP (TC-AMP) to the N6 group of A37, together with TsaE and TsaB. TsaD likely plays a direct catalytic role in this reaction. In Deinococcus geothermalis (strain DSM 11300 / CIP 105573 / AG-3a), this protein is tRNA N6-adenosine threonylcarbamoyltransferase.